The sequence spans 243 residues: UPF0246 protein SpyM51747 (243 aa).

The protein belongs to the UPF0246 family.

The sequence is that of UPF0246 protein SpyM51747 from Streptococcus pyogenes serotype M5 (strain Manfredo).